Here is a 719-residue protein sequence, read N- to C-terminus: Photosystem I P700 chlorophyll a apoprotein A1 (719 aa).

The next 8 membrane-spanning stretches (helical) occupy residues 59–82 (VFSA…FHGA), 145–168 (LYCT…FHYH), 184–208 (LNHH…HVSL), 280–298 (TAHH…GHMY), 335–358 (WHAQ…HHMY), 374–400 (LSLF…IFMV), 422–444 (AIVS…LYIH), and 520–538 (FLVH…LILL). Residues Cys-562 and Cys-571 each coordinate [4Fe-4S] cluster. The next 2 helical transmembrane spans lie at 578–599 (HVFL…HFSW) and 653–675 (LSAY…MFLF). Residue His-664 participates in chlorophyll a' binding. Residues Met-672 and Tyr-680 each coordinate chlorophyll a. Trp-681 is a binding site for phylloquinone. Residues 713-719 (AVGVAHY) form a helical membrane-spanning segment.

Belongs to the PsaA/PsaB family. In terms of assembly, the PsaA/B heterodimer binds the P700 chlorophyll special pair and subsequent electron acceptors. PSI consists of a core antenna complex that captures photons, and an electron transfer chain that converts photonic excitation into a charge separation. The eukaryotic PSI reaction center is composed of at least 11 subunits. P700 is a chlorophyll a/chlorophyll a' dimer, A0 is one or more chlorophyll a, A1 is one or both phylloquinones and FX is a shared 4Fe-4S iron-sulfur center. is required as a cofactor.

The protein resides in the plastid. Its subcellular location is the chloroplast thylakoid membrane. The enzyme catalyses reduced [plastocyanin] + hnu + oxidized [2Fe-2S]-[ferredoxin] = oxidized [plastocyanin] + reduced [2Fe-2S]-[ferredoxin]. Its function is as follows. PsaA and PsaB bind P700, the primary electron donor of photosystem I (PSI), as well as the electron acceptors A0, A1 and FX. PSI is a plastocyanin-ferredoxin oxidoreductase, converting photonic excitation into a charge separation, which transfers an electron from the donor P700 chlorophyll pair to the spectroscopically characterized acceptors A0, A1, FX, FA and FB in turn. Oxidized P700 is reduced on the lumenal side of the thylakoid membrane by plastocyanin. This chain is Photosystem I P700 chlorophyll a apoprotein A1, found in Encephalartos lebomboensis (Lebombo cycad).